A 271-amino-acid chain; its full sequence is Formamidopyrimidine-DNA glycosylase (271 aa).

Pro2 serves as the catalytic Schiff-base intermediate with DNA. Catalysis depends on Glu3, which acts as the Proton donor. Residue Lys57 is the Proton donor; for beta-elimination activity of the active site. The DNA site is built by His90, Arg109, and Lys151. The FPG-type zinc finger occupies 236–270; sequence HVYGRGGETCTQCGNLLSEIRLGQRTTVFCSICQP. Arg260 (proton donor; for delta-elimination activity) is an active-site residue.

This sequence belongs to the FPG family. Monomer. It depends on Zn(2+) as a cofactor.

It carries out the reaction Hydrolysis of DNA containing ring-opened 7-methylguanine residues, releasing 2,6-diamino-4-hydroxy-5-(N-methyl)formamidopyrimidine.. It catalyses the reaction 2'-deoxyribonucleotide-(2'-deoxyribose 5'-phosphate)-2'-deoxyribonucleotide-DNA = a 3'-end 2'-deoxyribonucleotide-(2,3-dehydro-2,3-deoxyribose 5'-phosphate)-DNA + a 5'-end 5'-phospho-2'-deoxyribonucleoside-DNA + H(+). Its function is as follows. Involved in base excision repair of DNA damaged by oxidation or by mutagenic agents. Acts as a DNA glycosylase that recognizes and removes damaged bases. Has a preference for oxidized purines, such as 7,8-dihydro-8-oxoguanine (8-oxoG). Has AP (apurinic/apyrimidinic) lyase activity and introduces nicks in the DNA strand. Cleaves the DNA backbone by beta-delta elimination to generate a single-strand break at the site of the removed base with both 3'- and 5'-phosphates. The chain is Formamidopyrimidine-DNA glycosylase from Shewanella oneidensis (strain ATCC 700550 / JCM 31522 / CIP 106686 / LMG 19005 / NCIMB 14063 / MR-1).